Reading from the N-terminus, the 317-residue chain is 8-oxo-(d)GTP phosphatase (317 aa).

Positions Arg-15–Lys-148 constitute a Nudix hydrolase domain. Residues Arg-43 to Tyr-46, Asp-48, and Lys-53 to Lys-55 each bind substrate. 3 residues coordinate Mg(2+): Lys-53, Glu-69, and Glu-73. A Nudix box motif is present at residues Gly-54–Gly-75. Positions 89, 99, 118, and 136 each coordinate substrate. Mg(2+) is bound at residue Glu-118.

It belongs to the Nudix hydrolase family. Requires Mg(2+) as cofactor.

The catalysed reaction is 8-oxo-dGTP + H2O = 8-oxo-dGDP + phosphate + H(+). It carries out the reaction 8-oxo-GTP + H2O = 8-oxo-GDP + phosphate + H(+). Functionally, catalyzes the conversion of 8-oxo-dGTP to 8-oxo-dGDP, and 8-oxo-GTP to 8-oxo-GDP. In Mycobacterium tuberculosis (strain CDC 1551 / Oshkosh), this protein is 8-oxo-(d)GTP phosphatase.